The chain runs to 406 residues: DNA primase DnaG (406 aa).

The 79-residue stretch at 169–247 (PNLIIVEGRA…KIDFVARAPI (79 aa)) folds into the Toprim domain. Mg(2+) is bound by residues Glu175, Asp220, and Asp222.

This sequence belongs to the archaeal DnaG primase family. Forms a ternary complex with MCM helicase and DNA. Component of the archaeal exosome complex. Interacts with Csl4 but not with Rrp4. Mg(2+) serves as cofactor.

It catalyses the reaction ssDNA + n NTP = ssDNA/pppN(pN)n-1 hybrid + (n-1) diphosphate.. Functionally, RNA polymerase that catalyzes the synthesis of short RNA molecules used as primers for DNA polymerase during DNA replication. Can use NTPs but not dNTPs. Binds DNA. Also part of the exosome, which is a complex involved in RNA degradation. Acts as a poly(A)-binding protein that enhances the interaction between heteromeric, adenine-rich transcripts and the exosome. The chain is DNA primase DnaG from Saccharolobus solfataricus (strain ATCC 35092 / DSM 1617 / JCM 11322 / P2) (Sulfolobus solfataricus).